Here is a 287-residue protein sequence, read N- to C-terminus: uncharacterized protein (287 aa).

An N-terminal signal peptide occupies residues 1–31 (MLGSMALKLRKWIWASIPSLALILSSCSALV).

Belongs to the MG439/MG440 family.

This is an uncharacterized protein from Mycoplasma pneumoniae (strain ATCC 29342 / M129 / Subtype 1) (Mycoplasmoides pneumoniae).